The following is a 526-amino-acid chain: Exodeoxyribonuclease 7 large subunit (526 aa).

The tract at residues 499–526 is disordered; sequence AGEDGTPSQAPKKRPARAGEPTKQGSLF.

It belongs to the XseA family. As to quaternary structure, heterooligomer composed of large and small subunits.

Its subcellular location is the cytoplasm. The catalysed reaction is Exonucleolytic cleavage in either 5'- to 3'- or 3'- to 5'-direction to yield nucleoside 5'-phosphates.. In terms of biological role, bidirectionally degrades single-stranded DNA into large acid-insoluble oligonucleotides, which are then degraded further into small acid-soluble oligonucleotides. This is Exodeoxyribonuclease 7 large subunit from Sinorhizobium medicae (strain WSM419) (Ensifer medicae).